The chain runs to 1142 residues: Golgi apparatus protein 1 (1142 aa).

Residues 1–29 (MAPCGRVRSRCPGPALLLLLALAARPALA) form the signal peptide. Residues 30–1108 (GPPAAALQAG…MQVMTSPSKN (1079 aa)) lie on the Extracellular side of the membrane. Over residues 45 to 60 (AGQPAQGAAPGAAGPR) the composition is skewed to low complexity. Residues 45-69 (AGQPAQGAAPGAAGPRGARGGGGGS) form a disordered region. Cys-rich GLG1 repeat units follow at residues 81–112 (CRED…EPDN), 113–175 (EISS…GNIT), 178–241 (QCHQ…VKEA), 249–309 (QVSD…FEES), 310–376 (MSEK…HRGR), 377–436 (QVSS…RGEK), 438–500 (NVGL…YTEK), 501–567 (MVED…YRTE), 572–631 (RLSR…DDLV), 633–691 (DCRD…KHQK), 692–751 (EMNE…RNDT), 759–819 (RVSL…KQLS), 821–874 (RCHQ…KNSE), 875–942 (VMDP…ADQR), 943–998 (LSPD…ECLK), and 1004–1064 (IKTE…EDKR). N-linked (GlcNAc...) asparagine glycans are attached at residues N128 and N173. N-linked (GlcNAc...) asparagine glycosylation occurs at N544. N-linked (GlcNAc...) asparagine glycosylation is found at N640 and N749. A helical membrane pass occupies residues 1109–1129 (YILSVITVGICVLFLIGLMCG). Topologically, residues 1130–1142 (RITKRVTRELKDR) are cytoplasmic.

Fucosylation is essential for binding to E-selectin. In terms of processing, N-glycosylated. Contains sialic acid residues.

It is found in the golgi apparatus membrane. The protein resides in the golgi outpost. The protein localises to the cytoplasm. It localises to the cytoskeleton. Its subcellular location is the microtubule organizing center. Binds fibroblast growth factor and E-selectin (cell-adhesion lectin on endothelial cells mediating the binding of neutrophils). Binds fibroblast growth factor (FGF). May be involved in intracellular FGF trafficking and the regulation of cellular responses to FGFS. This chain is Golgi apparatus protein 1 (GLG1), found in Gallus gallus (Chicken).